The following is a 240-amino-acid chain: DNA repair protein RecO (240 aa).

Belongs to the RecO family.

Its function is as follows. Involved in DNA repair and RecF pathway recombination. This is DNA repair protein RecO from Xanthomonas oryzae pv. oryzae (strain MAFF 311018).